The chain runs to 198 residues: dITP/XTP pyrophosphatase (198 aa).

Position 9–14 (9–14 (SNNAKK)) interacts with substrate. The Mg(2+) site is built by Asp41 and Asp70. The Proton acceptor role is filled by Asp70. Substrate-binding positions include Ser71, 153–156 (FGYD), Lys176, and 181–182 (HR).

The protein belongs to the HAM1 NTPase family. In terms of assembly, homodimer. Requires Mg(2+) as cofactor.

The catalysed reaction is XTP + H2O = XMP + diphosphate + H(+). It carries out the reaction dITP + H2O = dIMP + diphosphate + H(+). It catalyses the reaction ITP + H2O = IMP + diphosphate + H(+). Its function is as follows. Pyrophosphatase that catalyzes the hydrolysis of nucleoside triphosphates to their monophosphate derivatives, with a high preference for the non-canonical purine nucleotides XTP (xanthosine triphosphate), dITP (deoxyinosine triphosphate) and ITP. Seems to function as a house-cleaning enzyme that removes non-canonical purine nucleotides from the nucleotide pool, thus preventing their incorporation into DNA/RNA and avoiding chromosomal lesions. The chain is dITP/XTP pyrophosphatase from Aromatoleum aromaticum (strain DSM 19018 / LMG 30748 / EbN1) (Azoarcus sp. (strain EbN1)).